Here is a 137-residue protein sequence, read N- to C-terminus: Large ribosomal subunit protein uL13 (137 aa).

Arg-55 carries the post-translational modification Citrulline. Ser-73 is subject to Phosphoserine. Citrulline is present on Arg-136.

It belongs to the universal ribosomal protein uL13 family. In terms of assembly, component of the 60S ribosome. Component of the GAIT complex. Interacts with EIF4G1. Phosphorylation at Ser-73 upon interferon-gamma treatment in macrophages involves a DAPK1-DAPK3 kinase cascade and is causing release from the ribosome, association with the GAIT complex and subsequent involvement in transcript-selective translation inhibition. Post-translationally, citrullinated by PADI4.

It localises to the cytoplasm. In terms of biological role, associated with ribosomes but is not required for canonical ribosome function and has extra-ribosomal functions. Component of the GAIT (gamma interferon-activated inhibitor of translation) complex which mediates interferon-gamma-induced transcript-selective translation inhibition in inflammation processes. Upon interferon-gamma activation and subsequent phosphorylation dissociates from the ribosome and assembles into the GAIT complex which binds to stem loop-containing GAIT elements in the 3'-UTR of diverse inflammatory mRNAs (such as ceruplasmin) and suppresses their translation. In the GAIT complex interacts with m7G cap-bound eIF4G at or near the eIF3-binding site and blocks the recruitment of the 43S ribosomal complex. Involved in methylation of rRNA. This is Large ribosomal subunit protein uL13 (RPL13A) from Sus scrofa (Pig).